The primary structure comprises 624 residues: Vitamin B12 transporter BtuB (624 aa).

The N-terminal stretch at 1–21 (MTIKKYTLLTALSVTAFSGWA) is a signal peptide. Residues 31–38 (NEMVVTAN) carry the TonB box motif. Residues 43 to 157 (PKSSVLAPVD…IGGVVNIITE (115 aa)) enclose the TBDR plug domain. Residues leucine 88, serine 90, asparagine 97, and 115–116 (IS) each bind cyanocob(III)alamin. Residues 160 to 624 (TLGSTLTAGL…EYYFTGSYNF (465 aa)) enclose the TBDR beta-barrel domain. Beta stranded transmembrane passes span 163 to 170 (STLTAGLG), 174 to 183 (YQNYNGSTQQ), and 189 to 200 (TTITLAGNYDYS). Positions 204, 216, 218, and 220 each coordinate Ca(2+). A run of 2 beta stranded transmembrane segments spans residues 222-232 (YLGKMLWLGAN) and 237-253 (EQFS…NRSD). The Ca(2+) site is built by tyrosine 254, aspartate 255, and aspartate 266. 17 consecutive transmembrane segments (beta stranded) span residues 268-282 (RSLS…INFS), 284-301 (GGYA…QDYN), 314-330 (TLDD…NTYQ), 333-342 (LGNVGGGLDW), 358-374 (YEQR…QFVG), 376-386 (VTLEGAIRGDD), 390-405 (FGWH…WEFV), 408-422 (YRLI…KAPN), 440-449 (ESTQWEAAIT), 455-464 (LDWRLSAYRN), 481-498 (YYNV…TGSF), 502-517 (PLSH…PRNA), 525-537 (RRAK…QLDW), 543-557 (DWSV…RYDS), 568-582 (PVKL…LAVS), 595-606 (IANLFDKDYEMV), and 612-624 (PGRE…SYNF). Position 314 (threonine 314) interacts with cyanocob(III)alamin. Arginine 525 lines the cyanocob(III)alamin pocket. Residues 607-624 (YGYQTPGREYYFTGSYNF) carry the TonB C-terminal box motif.

This sequence belongs to the TonB-dependent receptor family. BtuB (TC 1.B.14.3.1) subfamily.

Its subcellular location is the cell outer membrane. Its function is as follows. Involved in the active translocation of vitamin B12 (cyanocobalamin) across the outer membrane to the periplasmic space. It derives its energy for transport by interacting with the trans-periplasmic membrane protein TonB. This is Vitamin B12 transporter BtuB from Yersinia pseudotuberculosis serotype O:1b (strain IP 31758).